The primary structure comprises 516 residues: L-amino acid oxidase Lm29 (516 aa).

An N-terminal signal peptide occupies residues 1–18; it reads MNVFFMFSLLFLAALGSC. A disulfide bridge connects residues C28 and C191. FAD is bound by residues 61–62, 81–82, R89, and 105–108; these read MS, EA, and GPMR. Position 108 (R108) interacts with substrate. N190 is a glycosylation site (N-linked (GlcNAc...) asparagine). H241 is a binding site for substrate. Residue V279 participates in FAD binding. A disulfide bond links C349 and C430. An N-linked (GlcNAc...) asparagine glycan is attached at N379. Y390 provides a ligand contact to substrate. Residues E475 and 482 to 487 each bind FAD; that span reads GWIDST. 482–483 is a substrate binding site; sequence GW.

The protein belongs to the flavin monoamine oxidase family. FIG1 subfamily. Homodimer; non-covalently linked. Requires FAD as cofactor. As to expression, expressed by the venom gland.

It is found in the secreted. It catalyses the reaction an L-alpha-amino acid + O2 + H2O = a 2-oxocarboxylate + H2O2 + NH4(+). It carries out the reaction L-leucine + O2 + H2O = 4-methyl-2-oxopentanoate + H2O2 + NH4(+). The enzyme catalyses L-phenylalanine + O2 + H2O = 3-phenylpyruvate + H2O2 + NH4(+). The catalysed reaction is L-tryptophan + O2 + H2O = indole-3-pyruvate + H2O2 + NH4(+). It catalyses the reaction L-methionine + O2 + H2O = 4-methylsulfanyl-2-oxobutanoate + H2O2 + NH4(+). It carries out the reaction L-isoleucine + O2 + H2O = (S)-3-methyl-2-oxopentanoate + H2O2 + NH4(+). The enzyme catalyses L-tyrosine + O2 + H2O = 3-(4-hydroxyphenyl)pyruvate + H2O2 + NH4(+). Catalyzes an oxidative deamination of predominantly hydrophobic and aromatic L-amino acids, thus producing hydrogen peroxide that may contribute to the diverse toxic effects of this enzyme. Is highly active on L-Met=L-Leu&gt;&gt;L-Phe&gt;L-Trp&gt;L-Tyr&gt;L-Ile, and weakly or not active on L-His, L-Arg, L-Val, L-Gln, L-Thr, L-Lys, and L-Ser. Exhibits a low myotoxicity (a mild myonecrosis is observed after injection in mice quadriceps muscle). In vitro, is cytotoxic to a lot of human cell lines, including AGS (IC(50)=22.7 ug/ml), MCF-7 (IC(50)=1.4 ug/ml), HL-60, HeLa and Jurkat cells, as well as to the parasite Leishmania brasiliensis (IC(50)=2.22 ug/ml). This cytotoxicity is dependent on the production of hydrogen peroxyde, since it is inhibited by catalase, a hydrogen peroxyde scavenger. The sequence is that of L-amino acid oxidase Lm29 from Lachesis muta (South American bushmaster).